The following is a 138-amino-acid chain: Lutropin subunit beta (138 aa).

The first 17 residues, 1 to 17 (LQGLLLWLLLSVGGVWA), serve as a signal peptide directing secretion. Cystine bridges form between C26-C74, C40-C89, C43-C127, C51-C105, C55-C107, and C110-C117. Residue N30 is glycosylated (N-linked (GlcNAc...) asparagine).

Belongs to the glycoprotein hormones subunit beta family. Heterodimer of a common alpha chain and a unique beta chain which confers biological specificity to thyrotropin, lutropin, follitropin and gonadotropin.

The protein localises to the secreted. Promotes spermatogenesis and ovulation by stimulating the testes and ovaries to synthesize steroids. The polypeptide is Lutropin subunit beta (LHB) (Canis lupus familiaris (Dog)).